We begin with the raw amino-acid sequence, 193 residues long: Ion-translocating oxidoreductase complex subunit A (193 aa).

The next 6 helical transmembrane spans lie at 5 to 25 (ALLF…FLGL), 39 to 59 (IGMG…SWLV), 62 to 82 (FILV…LVLA), 102 to 122 (LLGI…VVLL), 134 to 154 (TIYG…FAAI), and 171 to 191 (SIAL…TGLV).

It belongs to the NqrDE/RnfAE family. In terms of assembly, the complex is composed of six subunits: RnfA, RnfB, RnfC, RnfD, RnfE and RnfG.

The protein localises to the cell inner membrane. In terms of biological role, part of a membrane-bound complex that couples electron transfer with translocation of ions across the membrane. This chain is Ion-translocating oxidoreductase complex subunit A, found in Pectobacterium carotovorum subsp. carotovorum (strain PC1).